The primary structure comprises 212 residues: Thymidylate kinase (212 aa).

Residues 16 to 21 (RAGKTT), arginine 97, arginine 182, and lysine 192 contribute to the ATP site.

It belongs to the thymidylate kinase family. Mg(2+) serves as cofactor.

It carries out the reaction dTMP + ATP = dTDP + ADP. The protein operates within pyrimidine metabolism; dTTP biosynthesis. Catalyzes the phosphorylation of thymidine monophosphate (dTMP) to thymidine diphosphate (dTDP), the immediate precursor for the DNA building block dTTP, with ATP as the preferred phosphoryl donor in the presence of Mg(2+). In Danio rerio (Zebrafish), this protein is Thymidylate kinase (dtymk).